The primary structure comprises 573 residues: Urease subunit alpha 2 (573 aa).

Positions 135 to 573 (GGMDTHVHYI…ISLNQLYFFS (439 aa)) constitute a Urease domain. Ni(2+) is bound by residues histidine 140, histidine 142, and lysine 223. Lysine 223 bears the N6-carboxylysine mark. Histidine 225 contributes to the substrate binding site. Ni(2+) contacts are provided by histidine 252 and histidine 278. The active-site Proton donor is the histidine 326. Aspartate 366 contributes to the Ni(2+) binding site.

The protein belongs to the metallo-dependent hydrolases superfamily. Urease alpha subunit family. As to quaternary structure, heterotrimer of UreA (gamma), UreB (beta) and UreC (alpha) subunits. Three heterotrimers associate to form the active enzyme. Ni cation serves as cofactor. Carboxylation allows a single lysine to coordinate two nickel ions.

It is found in the cytoplasm. It carries out the reaction urea + 2 H2O + H(+) = hydrogencarbonate + 2 NH4(+). It participates in nitrogen metabolism; urea degradation; CO(2) and NH(3) from urea (urease route): step 1/1. In terms of biological role, disrupting the ure2 operon has no effect on urease activity or pathogen survival in BALB/c mice when administered orally. The protein is Urease subunit alpha 2 of Brucella abortus (strain 2308).